The following is a 435-amino-acid chain: Adenylosuccinate lyase (435 aa).

Residues 4–5 (RY), 73–75 (RHD), and 99–100 (TS) each bind N(6)-(1,2-dicarboxyethyl)-AMP. The active-site Proton donor/acceptor is the His147. Gln218 is a N(6)-(1,2-dicarboxyethyl)-AMP binding site. Ser268 serves as the catalytic Proton donor/acceptor. Residues Ser269, 274–276 (KKN), Asn282, and 313–317 (SAERV) contribute to the N(6)-(1,2-dicarboxyethyl)-AMP site.

Belongs to the lyase 1 family. Adenylosuccinate lyase subfamily. In terms of assembly, homotetramer. Residues from neighboring subunits contribute catalytic and substrate-binding residues to each active site.

It carries out the reaction N(6)-(1,2-dicarboxyethyl)-AMP = fumarate + AMP. The catalysed reaction is (2S)-2-[5-amino-1-(5-phospho-beta-D-ribosyl)imidazole-4-carboxamido]succinate = 5-amino-1-(5-phospho-beta-D-ribosyl)imidazole-4-carboxamide + fumarate. The protein operates within purine metabolism; AMP biosynthesis via de novo pathway; AMP from IMP: step 2/2. It functions in the pathway purine metabolism; IMP biosynthesis via de novo pathway; 5-amino-1-(5-phospho-D-ribosyl)imidazole-4-carboxamide from 5-amino-1-(5-phospho-D-ribosyl)imidazole-4-carboxylate: step 2/2. In terms of biological role, catalyzes two reactions in de novo purine nucleotide biosynthesis. Catalyzes the breakdown of 5-aminoimidazole- (N-succinylocarboxamide) ribotide (SAICAR or 2-[5-amino-1-(5-phospho-beta-D-ribosyl)imidazole-4-carboxamido]succinate) to 5-aminoimidazole-4-carboxamide ribotide (AICAR or 5-amino-1-(5-phospho-beta-D-ribosyl)imidazole-4-carboxamide) and fumarate, and of adenylosuccinate (ADS or N(6)-(1,2-dicarboxyethyl)-AMP) to adenosine monophosphate (AMP) and fumarate. This is Adenylosuccinate lyase (purB) from Deinococcus radiodurans (strain ATCC 13939 / DSM 20539 / JCM 16871 / CCUG 27074 / LMG 4051 / NBRC 15346 / NCIMB 9279 / VKM B-1422 / R1).